We begin with the raw amino-acid sequence, 587 residues long: Pyruvate decarboxylase 3 (587 aa).

Residues Asp48 and His135 each coordinate substrate. Positions 415–496 (DSWFNCQKLR…FLINNGGYTI (82 aa)) are thiamine pyrophosphate binding. Mg(2+) is bound by residues Asp464, Asn491, and Gly493. Glu497 is a binding site for substrate.

This sequence belongs to the TPP enzyme family. As to quaternary structure, homotetramer. A metal cation is required as a cofactor. The cofactor is thiamine diphosphate.

The enzyme catalyses a 2-oxocarboxylate + H(+) = an aldehyde + CO2. The protein is Pyruvate decarboxylase 3 (PDC3) of Oryza sativa subsp. indica (Rice).